A 457-amino-acid polypeptide reads, in one-letter code: Bifunctional protein GlmU (457 aa).

The interval Met1–Arg230 is pyrophosphorylase. Residues Leu7–Gly10, Lys21, Gln73, Gly78–Thr79, Tyr104–Asp106, Gly140, Glu155, Asn170, and Asn228 contribute to the UDP-N-acetyl-alpha-D-glucosamine site. Asp106 is a binding site for Mg(2+). Asn228 is a Mg(2+) binding site. The tract at residues Val231 to Ala251 is linker. An N-acetyltransferase region spans residues Gly252–Ser457. 2 residues coordinate UDP-N-acetyl-alpha-D-glucosamine: Arg334 and Lys352. Catalysis depends on His364, which acts as the Proton acceptor. Tyr367 and Asn378 together coordinate UDP-N-acetyl-alpha-D-glucosamine. Residues Ala381, Asn387–Tyr388, Ser406, Ala424, and Arg441 each bind acetyl-CoA.

This sequence in the N-terminal section; belongs to the N-acetylglucosamine-1-phosphate uridyltransferase family. The protein in the C-terminal section; belongs to the transferase hexapeptide repeat family. In terms of assembly, homotrimer. The cofactor is Mg(2+).

It is found in the cytoplasm. It catalyses the reaction alpha-D-glucosamine 1-phosphate + acetyl-CoA = N-acetyl-alpha-D-glucosamine 1-phosphate + CoA + H(+). It carries out the reaction N-acetyl-alpha-D-glucosamine 1-phosphate + UTP + H(+) = UDP-N-acetyl-alpha-D-glucosamine + diphosphate. It participates in nucleotide-sugar biosynthesis; UDP-N-acetyl-alpha-D-glucosamine biosynthesis; N-acetyl-alpha-D-glucosamine 1-phosphate from alpha-D-glucosamine 6-phosphate (route II): step 2/2. It functions in the pathway nucleotide-sugar biosynthesis; UDP-N-acetyl-alpha-D-glucosamine biosynthesis; UDP-N-acetyl-alpha-D-glucosamine from N-acetyl-alpha-D-glucosamine 1-phosphate: step 1/1. The protein operates within bacterial outer membrane biogenesis; LPS lipid A biosynthesis. Functionally, catalyzes the last two sequential reactions in the de novo biosynthetic pathway for UDP-N-acetylglucosamine (UDP-GlcNAc). The C-terminal domain catalyzes the transfer of acetyl group from acetyl coenzyme A to glucosamine-1-phosphate (GlcN-1-P) to produce N-acetylglucosamine-1-phosphate (GlcNAc-1-P), which is converted into UDP-GlcNAc by the transfer of uridine 5-monophosphate (from uridine 5-triphosphate), a reaction catalyzed by the N-terminal domain. In Bordetella bronchiseptica (strain ATCC BAA-588 / NCTC 13252 / RB50) (Alcaligenes bronchisepticus), this protein is Bifunctional protein GlmU.